Here is a 64-residue protein sequence, read N- to C-terminus: Small ribosomal subunit protein eS17 (64 aa).

Belongs to the eukaryotic ribosomal protein eS17 family.

The protein is Small ribosomal subunit protein eS17 of Methanocorpusculum labreanum (strain ATCC 43576 / DSM 4855 / Z).